Reading from the N-terminus, the 53-residue chain is Small, acid-soluble spore protein K (53 aa).

The disordered stretch occupies residues 1–53 (MGRQAEFWSESKNNSKIDGQPKAKARFASKRPNGTINTHPQERMRAANQQEEE).

It belongs to the SspK family.

The protein resides in the spore core. The polypeptide is Small, acid-soluble spore protein K (Bacillus cytotoxicus (strain DSM 22905 / CIP 110041 / 391-98 / NVH 391-98)).